We begin with the raw amino-acid sequence, 432 residues long: Probable anion transporter 5 (432 aa).

The signal sequence occupies residues M1–C23. The next 11 membrane-spanning stretches (helical) occupy residues T50–A70, V78–N98, G101–I121, I140–V160, G164–I184, L229–M249, V273–I293, K305–F325, V331–V351, Y360–V380, and V405–S425.

This sequence belongs to the major facilitator superfamily. Sodium/anion cotransporter (TC 2.A.1.14) family. As to expression, ubiquitous.

Its subcellular location is the golgi apparatus membrane. Functionally, inorganic phosphate and probable anion transporter. The polypeptide is Probable anion transporter 5 (ANTR5) (Arabidopsis thaliana (Mouse-ear cress)).